We begin with the raw amino-acid sequence, 359 residues long: 3-dehydroquinate synthase (359 aa).

NAD(+) contacts are provided by residues 70–75, 104–108, 128–129, K141, and K150; these read DAEGGK, GAATD, and TT. Zn(2+)-binding residues include E183, H246, and H262.

The protein belongs to the sugar phosphate cyclases superfamily. Dehydroquinate synthase family. Co(2+) is required as a cofactor. It depends on Zn(2+) as a cofactor. NAD(+) serves as cofactor.

It is found in the cytoplasm. The catalysed reaction is 7-phospho-2-dehydro-3-deoxy-D-arabino-heptonate = 3-dehydroquinate + phosphate. It participates in metabolic intermediate biosynthesis; chorismate biosynthesis; chorismate from D-erythrose 4-phosphate and phosphoenolpyruvate: step 2/7. Functionally, catalyzes the conversion of 3-deoxy-D-arabino-heptulosonate 7-phosphate (DAHP) to dehydroquinate (DHQ). The protein is 3-dehydroquinate synthase of Mycolicibacterium gilvum (strain PYR-GCK) (Mycobacterium gilvum (strain PYR-GCK)).